The primary structure comprises 301 residues: UDP-3-O-acyl-N-acetylglucosamine deacetylase (301 aa).

Residues His-75, His-233, and Asp-237 each coordinate Zn(2+). The active-site Proton donor is His-260.

It belongs to the LpxC family. It depends on Zn(2+) as a cofactor.

It catalyses the reaction a UDP-3-O-[(3R)-3-hydroxyacyl]-N-acetyl-alpha-D-glucosamine + H2O = a UDP-3-O-[(3R)-3-hydroxyacyl]-alpha-D-glucosamine + acetate. The protein operates within glycolipid biosynthesis; lipid IV(A) biosynthesis; lipid IV(A) from (3R)-3-hydroxytetradecanoyl-[acyl-carrier-protein] and UDP-N-acetyl-alpha-D-glucosamine: step 2/6. Its function is as follows. Catalyzes the hydrolysis of UDP-3-O-myristoyl-N-acetylglucosamine to form UDP-3-O-myristoylglucosamine and acetate, the committed step in lipid A biosynthesis. The chain is UDP-3-O-acyl-N-acetylglucosamine deacetylase from Aliarcobacter butzleri (strain RM4018) (Arcobacter butzleri).